We begin with the raw amino-acid sequence, 186 residues long: Interferon beta (186 aa).

Positions 1-21 (MTGRCILQIALLVCFFTTAHS) are cleaved as a signal peptide. Tyr24 is modified (phosphotyrosine). Asn46, Asn101, Asn131, and Asn136 each carry an N-linked (GlcNAc...) asparagine glycan. A disulfide bridge connects residues Cys52 and Cys161.

The protein belongs to the alpha/beta interferon family. Monomer.

It localises to the secreted. Its function is as follows. Type I interferon cytokine that plays a key role in the innate immune response to infection, developing tumors and other inflammatory stimuli. Signals via binding to high-affinity (IFNAR2) and low-affinity (IFNAR1) heterodimeric receptor, activating the canonical Jak-STAT signaling pathway resulting in transcriptional activation or repression of interferon-regulated genes that encode the effectors of the interferon response, such as antiviral proteins, regulators of cell proliferation and differentiation, and immunoregulatory proteins. Signals mostly via binding to a IFNAR1-IFNAR2 heterodimeric receptor, but can also function with IFNAR1 alone and independently of Jak-STAT pathways. Elicits a wide variety of responses, including antiviral and antibacterial activities, and can regulate the development of B-cells, myelopoiesis and lipopolysaccharide (LPS)-inducible production of tumor necrosis factor. Plays a role in neuronal homeostasis by regulating dopamine turnover and protecting dopaminergic neurons: acts by promoting neuronal autophagy and alpha-synuclein clearance, thereby preventing dopaminergic neuron loss. IFNB1 is more potent than interferon-alpha (IFN-alpha) in inducing the apoptotic and antiproliferative pathways required for control of tumor cell growth. The polypeptide is Interferon beta (IFNB1) (Felis catus (Cat)).